Consider the following 268-residue polypeptide: Tryptophan synthase alpha chain (268 aa).

Catalysis depends on proton acceptor residues Glu-49 and Asp-60.

It belongs to the TrpA family. As to quaternary structure, tetramer of two alpha and two beta chains.

The catalysed reaction is (1S,2R)-1-C-(indol-3-yl)glycerol 3-phosphate + L-serine = D-glyceraldehyde 3-phosphate + L-tryptophan + H2O. It participates in amino-acid biosynthesis; L-tryptophan biosynthesis; L-tryptophan from chorismate: step 5/5. In terms of biological role, the alpha subunit is responsible for the aldol cleavage of indoleglycerol phosphate to indole and glyceraldehyde 3-phosphate. This is Tryptophan synthase alpha chain from Aliivibrio fischeri (strain MJ11) (Vibrio fischeri).